The primary structure comprises 211 residues: V-type ATP synthase subunit D (211 aa).

Belongs to the V-ATPase D subunit family.

In terms of biological role, produces ATP from ADP in the presence of a proton gradient across the membrane. This is V-type ATP synthase subunit D from Enterococcus faecalis (strain ATCC 700802 / V583).